The chain runs to 115 residues: Virulence-associated protein A' (115 aa).

The HTH cro/C1-type domain occupies 16–70; sequence IKSDLDGLGINITEAAKALDVTRAALSEIINGKRGISAKMAWKLSKAFTNSDPEF. A DNA-binding region (H-T-H motif) is located at residues 27 to 46; it reads ITEAAKALDVTRAALSEIIN.

Belongs to the VapA/VapI family.

The chain is Virulence-associated protein A' (vapA') from Dichelobacter nodosus (Bacteroides nodosus).